Here is a 206-residue protein sequence, read N- to C-terminus: Phosphoribosylglycinamide formyltransferase (206 aa).

Gly-13 to Asn-15 provides a ligand contact to N(1)-(5-phospho-beta-D-ribosyl)glycinamide. (6R)-10-formyltetrahydrofolate-binding positions include Met-99 to Leu-102 and Asn-121. His-123 (proton donor) is an active-site residue. A (6R)-10-formyltetrahydrofolate-binding site is contributed by Asp-163. Glu-192 is a N(1)-(5-phospho-beta-D-ribosyl)glycinamide binding site.

This sequence belongs to the GART family.

It carries out the reaction N(1)-(5-phospho-beta-D-ribosyl)glycinamide + (6R)-10-formyltetrahydrofolate = N(2)-formyl-N(1)-(5-phospho-beta-D-ribosyl)glycinamide + (6S)-5,6,7,8-tetrahydrofolate + H(+). The protein operates within purine metabolism; IMP biosynthesis via de novo pathway; N(2)-formyl-N(1)-(5-phospho-D-ribosyl)glycinamide from N(1)-(5-phospho-D-ribosyl)glycinamide (10-formyl THF route): step 1/1. The protein is Phosphoribosylglycinamide formyltransferase (purN) of Dictyostelium discoideum (Social amoeba).